Here is a 53-residue protein sequence, read N- to C-terminus: Metallothionein (53 aa).

Residues 1–6 (MRVIRM) constitute a propeptide that is removed on maturation. Cu(+)-binding residues include Cys17, His19, Cys22, Cys24, Cys32, His33, Cys34, Cys43, and Cys45.

It belongs to the metallothionein superfamily.

Functionally, metallothioneins are small proteins that have a high content of cysteine residues which allow them to bind heavy metal ions through clusters of thiolate bonds. MymT binds up to seven ions of Cu(+), with a preference for four to six Cu(+) ions, in a solvent-shielded core. MymT protects M.tuberculosis from copper toxicity. The sequence is that of Metallothionein (mymT) from Mycobacterium tuberculosis (strain CDC 1551 / Oshkosh).